Here is a 127-residue protein sequence, read N- to C-terminus: MARIAGVDLPKRKRVEIGLTYIYGIGRSTSRQILNKLSIDYDTKVDQLTETEINAIRNAVTNEHKVEGELRTEVSMNIKRLMDLGCYRGLRHRKSLPCHGQRTSTNARTRKGPKRTAVKKKGAAKKK.

Positions 96 to 127 are disordered; sequence LPCHGQRTSTNARTRKGPKRTAVKKKGAAKKK. A compositionally biased stretch (basic residues) spans 108-127; it reads RTRKGPKRTAVKKKGAAKKK.

This sequence belongs to the universal ribosomal protein uS13 family. As to quaternary structure, part of the 30S ribosomal subunit. Forms a loose heterodimer with protein S19. Forms two bridges to the 50S subunit in the 70S ribosome.

Its function is as follows. Located at the top of the head of the 30S subunit, it contacts several helices of the 16S rRNA. In the 70S ribosome it contacts the 23S rRNA (bridge B1a) and protein L5 of the 50S subunit (bridge B1b), connecting the 2 subunits; these bridges are implicated in subunit movement. Contacts the tRNAs in the A and P-sites. The chain is Small ribosomal subunit protein uS13 from Desulfosudis oleivorans (strain DSM 6200 / JCM 39069 / Hxd3) (Desulfococcus oleovorans).